The sequence spans 1649 residues: eIF-2-alpha kinase GCN2 (1649 aa).

The interval 1–26 (MAGGRGAAGRGPAEPQESYSQRQDHE) is disordered. Residues 25 to 137 (HELQALEAIY…HHVQSFLSEH (113 aa)) enclose the RWD domain. Residues 146-205 (HEEMLERQAQEKQQRLLEARQKEEQEQREILHEIQKRKEEIKEEKKRKEMAKQERLEITS) are a coiled coil. Residues 227-260 (HGGSPDFVGNGKARAHSSGRSRRERQYSVCSGEA) form a disordered region. Serine 230 is modified (phosphoserine). The segment covering 239–249 (ARAHSSGRSRR) has biased composition (basic residues). Protein kinase domains lie at 296-539 (VYNA…HSFI) and 590-1001 (FEEL…SELL). ATP is bound by residues 596–604 (LGKGAFGAV) and lysine 619. Residues 662–785 (PAVPGTPPPD…CNEKDSRHEI (124 aa)) are disordered. At threonine 667 the chain carries Phosphothreonine. Polar residues predominate over residues 705-721 (LSSSVEWSTSAERSNSA). 2 stretches are compositionally biased toward acidic residues: residues 731-740 (SSDEEDEDER) and 754-764 (SDSDIIFDNED). The active-site Proton acceptor is the aspartate 847. Residue threonine 870 is modified to Phosphothreonine. Phosphothreonine; by autocatalysis is present on residues threonine 899 and threonine 904. The interval 1022–1493 (TDGKAYRTMM…DHVMQKLRTK (472 aa)) is histidyl-tRNA synthetase-like. Lysine 1259 is subject to N6-acetyllysine.

It belongs to the protein kinase superfamily. Ser/Thr protein kinase family. GCN2 subfamily. As to quaternary structure, homodimer; homodimerization is important for kinase activation by uncharged tRNAs. Interacts with GCN1; this interaction stimulates EIF2AK4/GCN2 kinase activity and is impaired by IMPACT upon a variety of stress conditions, such as amino acid depletion, UV-C irradiation, proteasome inhibitor treatment and glucose deprivation. Interacts with DNAJC3; this interaction inhibits EIF2AK4/GCN2 kinase activity during endoplasmic reticulum (ER), hypothermic and amino acid-starving stress conditions. Interacts with MAP3K20; activates EIF2AK4/GCN2 kinase activity in response to moderate ribotoxic stress. In terms of processing, autophosphorylated; autophosphorylation on Thr-899 is increased upon amino acid starvation and in UV irradiation cells and inhibited in presence of IMPACT.

Its subcellular location is the cytoplasm. The enzyme catalyses L-seryl-[protein] + ATP = O-phospho-L-seryl-[protein] + ADP + H(+). It carries out the reaction L-threonyl-[protein] + ATP = O-phospho-L-threonyl-[protein] + ADP + H(+). Metabolic-stress sensing protein kinase that phosphorylates the alpha subunit of eukaryotic translation initiation factor 2 (EIF2S1/eIF-2-alpha) in response to low amino acid availability. Plays a role as an activator of the integrated stress response (ISR) required for adaptation to amino acid starvation. EIF2S1/eIF-2-alpha phosphorylation in response to stress converts EIF2S1/eIF-2-alpha into a global protein synthesis inhibitor, leading to a global attenuation of cap-dependent translation, and thus to a reduced overall utilization of amino acids, while concomitantly initiating the preferential translation of ISR-specific mRNAs, such as the transcriptional activator ATF4, and hence allowing ATF4-mediated reprogramming of amino acid biosynthetic gene expression to alleviate nutrient depletion. Required for the translational induction of protein kinase PRKCH following amino acid starvation. Binds uncharged tRNAs. Involved in cell cycle arrest by promoting cyclin D1 mRNA translation repression after the unfolded protein response pathway (UPR) activation or cell cycle inhibitor CDKN1A/p21 mRNA translation activation in response to amino acid deprivation. Plays a role in the consolidation of synaptic plasticity, learning as well as formation of long-term memory. Plays a role in neurite outgrowth inhibition. Plays a role in feeding behavior to maintain amino acid homeostasis; contributes to the innate aversion toward diets of imbalanced amino acid composition. Plays a proapoptotic role in response to glucose deprivation. Promotes global cellular protein synthesis repression in response to UV irradiation independently of the stress-activated protein kinase/c-Jun N-terminal kinase (SAPK/JNK) and p38 MAPK signaling pathways. Plays a role in the antiviral response against alphavirus infection; impairs early viral mRNA translation of the incoming genomic virus RNA, thus preventing alphavirus replication. The chain is eIF-2-alpha kinase GCN2 from Rattus norvegicus (Rat).